A 278-amino-acid chain; its full sequence is Digeranylgeranylglyceryl phosphate synthase (278 aa).

8 consecutive transmembrane segments (helical) span residues 17–37 (MASF…LEMV), 40–60 (LIFA…LNDI), 91–111 (LLVF…LMAV), 129–149 (IIGN…GGIA), 153–173 (IDVT…REII), 204–224 (LLLV…FFGI), 226–246 (YLIS…PLLI), and 257–277 (SRNI…GSFF).

The protein belongs to the UbiA prenyltransferase family. DGGGP synthase subfamily. It depends on Mg(2+) as a cofactor.

It is found in the cell membrane. The catalysed reaction is sn-3-O-(geranylgeranyl)glycerol 1-phosphate + (2E,6E,10E)-geranylgeranyl diphosphate = 2,3-bis-O-(geranylgeranyl)-sn-glycerol 1-phosphate + diphosphate. It functions in the pathway membrane lipid metabolism; glycerophospholipid metabolism. Functionally, prenyltransferase that catalyzes the transfer of the geranylgeranyl moiety of geranylgeranyl diphosphate (GGPP) to the C2 hydroxyl of (S)-3-O-geranylgeranylglyceryl phosphate (GGGP). This reaction is the second ether-bond-formation step in the biosynthesis of archaeal membrane lipids. This is Digeranylgeranylglyceryl phosphate synthase from Methanococcus maripaludis (strain C5 / ATCC BAA-1333).